The chain runs to 146 residues: MVMGLHLLFLVFILGLGLTPPTLAQNDLRYNRFLEEHYDPKTKNGNDRYCDKMMRLRNMISPCKAINTFIHGKKESIKAICGTENGVPYNGNKRKSKSAFQVTICKHRGGSPRPPCQYRATAGSRNVVVACENGLPVHLDESIFRP.

The N-terminal stretch at 1–24 (MVMGLHLLFLVFILGLGLTPPTLA) is a signal peptide. The residue at position 25 (glutamine 25) is a Pyrrolidone carboxylic acid. The active-site Proton acceptor is the histidine 37. 3 disulfides stabilise this stretch: cysteine 50/cysteine 105, cysteine 63/cysteine 116, and cysteine 81/cysteine 131. The Nucleolar localization signal signature appears at 55–59 (RLRNM). TRNA is bound by residues cysteine 105 and valine 127. The active-site Proton donor is histidine 138.

Belongs to the pancreatic ribonuclease family. Homodimer. Interacts with RNH1; inhibiting ANG ribonuclease activity. Interacts with PCNA.

The protein localises to the secreted. It is found in the nucleus. It localises to the nucleolus. Its subcellular location is the cytoplasm. The protein resides in the stress granule. Has weak tRNA ribonuclease activity by itself due to partial autoinhibition by its C-terminus, which folds into a short alpha-helix that partially occludes the substrate-binding site. In absence of stress, the ribonuclease activity is inhibited by RNH1 in the cytoplasm. In response to stress, dissociates from RNH1 in the cytoplasm and associates with cytoplasmic ribosomes with vacant A-sites: ribosomes directly activate the tRNA ribonuclease activity of ANG by refolding the C-terminal alpha-helix. In response to stress, the angiogenic activity of ANG is inhibited by RNH1 in the nucleus. Secreted ribonuclease that can either promote or restrict cell proliferation of target cells, depending on the context. Endocytosed in target cells via its receptor PLXNB2 and translocates to the cytoplasm or nucleus. Under stress conditions, localizes to the cytoplasm and promotes the assembly of stress granules (SGs): specifically cleaves a subset of tRNAs within anticodon loops to produce tRNA-derived stress-induced fragments (tiRNAs), resulting in translation repression and inhibition of cell proliferation. tiRNas also prevent formation of apoptosome, thereby promoting cell survival. Preferentially cleaves RNAs between a pyrimidine and an adenosine residue, suggesting that it cleaves the anticodon loop of tRNA(Ala) (32-UUAGCAU-38) after positions 33 and 36. Cleaves a subset of tRNAs, including tRNA(Ala), tRNA(Glu), tRNA(Gly), tRNA(Lys), tRNA(Val), tRNA(His), tRNA(Asp) and tRNA(Sec). Under growth conditions and in differentiated cells, translocates to the nucleus and stimulates ribosomal RNA (rRNA) transcription, including that containing the initiation site sequences of 45S rRNA, thereby promoting cell growth and proliferation. Angiogenin induces vascularization of normal and malignant tissues via its ability to promote rRNA transcription. Involved in hematopoietic stem and progenitor cell (HSPC) growth and survival by promoting rRNA transcription in growth conditions and inhibiting translation in response to stress, respectively. Mediates the crosstalk between myeloid and intestinal epithelial cells to protect the intestinal epithelial barrier integrity: secreted by myeloid cells and promotes intestinal epithelial cells proliferation and survival. Also mediates osteoclast-endothelial cell crosstalk in growing bone: produced by osteoclasts and protects the neighboring vascular cells against senescence by promoting rRNA transcription. This is Angiogenin (ANG) from Saguinus oedipus (Cotton-top tamarin).